Reading from the N-terminus, the 585-residue chain is Cytoplasmic polyadenylation element-binding protein 1 (585 aa).

The disordered stretch occupies residues 1 to 32 (MQHQLKACGDVKTSSRAQQNHRRSTAASAKRS). 2 consecutive RRM domains span residues 251 to 356 (RKVF…PWRL) and 373 to 444 (RTVF…HAET). The disordered stretch occupies residues 513 to 533 (DQTRILPRPPHHPAAHHSHQR). Positions 521 to 532 (PPHHPAAHHSHQ) are enriched in basic residues.

In terms of assembly, interacts with fbf-1.

Its function is as follows. Cytoplasmic polyadenylation element binding protein that binds to and regulates the translation of specific mRNAs. Essential for progression through meiosis. Involved in spermatogenesis. This is Cytoplasmic polyadenylation element-binding protein 1 (cpb-1) from Caenorhabditis briggsae.